The chain runs to 465 residues: Phosphomethylpyrimidine synthase (465 aa).

Residues Asn-80, Met-109, Tyr-139, His-175, 195–197 (SRG), 236–239 (DSLR), and Glu-275 each bind substrate. His-279 provides a ligand contact to Zn(2+). Tyr-302 provides a ligand contact to substrate. His-343 lines the Zn(2+) pocket. [4Fe-4S] cluster-binding residues include Cys-423, Cys-426, and Cys-431.

It belongs to the ThiC family. [4Fe-4S] cluster is required as a cofactor.

The enzyme catalyses 5-amino-1-(5-phospho-beta-D-ribosyl)imidazole + S-adenosyl-L-methionine = 4-amino-2-methyl-5-(phosphooxymethyl)pyrimidine + CO + 5'-deoxyadenosine + formate + L-methionine + 3 H(+). The protein operates within cofactor biosynthesis; thiamine diphosphate biosynthesis. Its function is as follows. Catalyzes the synthesis of the hydroxymethylpyrimidine phosphate (HMP-P) moiety of thiamine from aminoimidazole ribotide (AIR) in a radical S-adenosyl-L-methionine (SAM)-dependent reaction. The sequence is that of Phosphomethylpyrimidine synthase from Synechococcus sp. (strain CC9311).